The chain runs to 269 residues: Thiazole synthase (269 aa).

The active-site Schiff-base intermediate with DXP is the lysine 105. 1-deoxy-D-xylulose 5-phosphate-binding positions include glycine 166, 192–193 (AG), and 214–215 (NT). The tract at residues 245–269 (AMSAQDAAQPSTPVLGTPFWHHDHG) is disordered.

This sequence belongs to the ThiG family. As to quaternary structure, homotetramer. Forms heterodimers with either ThiH or ThiS.

The protein resides in the cytoplasm. The enzyme catalyses [ThiS sulfur-carrier protein]-C-terminal-Gly-aminoethanethioate + 2-iminoacetate + 1-deoxy-D-xylulose 5-phosphate = [ThiS sulfur-carrier protein]-C-terminal Gly-Gly + 2-[(2R,5Z)-2-carboxy-4-methylthiazol-5(2H)-ylidene]ethyl phosphate + 2 H2O + H(+). It participates in cofactor biosynthesis; thiamine diphosphate biosynthesis. Functionally, catalyzes the rearrangement of 1-deoxy-D-xylulose 5-phosphate (DXP) to produce the thiazole phosphate moiety of thiamine. Sulfur is provided by the thiocarboxylate moiety of the carrier protein ThiS. In vitro, sulfur can be provided by H(2)S. The polypeptide is Thiazole synthase (Paracidovorax citrulli (strain AAC00-1) (Acidovorax citrulli)).